Here is a 616-residue protein sequence, read N- to C-terminus: Chaperone protein HscA (616 aa).

This sequence belongs to the heat shock protein 70 family.

Its function is as follows. Chaperone involved in the maturation of iron-sulfur cluster-containing proteins. Has a low intrinsic ATPase activity which is markedly stimulated by HscB. Involved in the maturation of IscU. This Escherichia coli O6:H1 (strain CFT073 / ATCC 700928 / UPEC) protein is Chaperone protein HscA.